The chain runs to 345 residues: S-adenosylmethionine:tRNA ribosyltransferase-isomerase (345 aa).

Belongs to the QueA family. In terms of assembly, monomer.

It localises to the cytoplasm. The catalysed reaction is 7-aminomethyl-7-carbaguanosine(34) in tRNA + S-adenosyl-L-methionine = epoxyqueuosine(34) in tRNA + adenine + L-methionine + 2 H(+). The protein operates within tRNA modification; tRNA-queuosine biosynthesis. Transfers and isomerizes the ribose moiety from AdoMet to the 7-aminomethyl group of 7-deazaguanine (preQ1-tRNA) to give epoxyqueuosine (oQ-tRNA). This chain is S-adenosylmethionine:tRNA ribosyltransferase-isomerase, found in Acidiphilium cryptum (strain JF-5).